The following is a 1157-amino-acid chain: MSLFGVGFLAFAKGKRVCAIGRSSLGKISDPLEVPNLLDLQLDSFDWLIGGPRWRAALDAYRKNPSGAPIAEKSGLDEVFDEISPIEDSAGNMQLNFSKPVLEAEELSVRECRVRGRTYSAPLYVEAEFMNHDTGEIKTQTVFMGDFPLMTDKGTFVINGTERVVVSQLVRSPGVYFERTPEKNSEKDLFSGRIIPARGAWLEFEVDRHDQLGVRVDRKRRQPVIFFLRAIGMTDDEIRDAFGEFESISVQHEKNIGLSRDDALREIYRRVRPGEQASAEAGRALLENFYFTSRRFDLARVGRYKVNRKLGVDVDPTRMVLTRSDIIATIRYLAALHLGFSEVAVLNSNKSVPISTDDIDHLGNRRIRPVGELVQNQLRAGLARMERVVRERMTTQDIEAIIPQTLINVMPIVAALKEFYGTSQLSQFMDQNNPLAGLTHKRRLSALGPGGLSRERAGVEVRDVNPSHYGRMCPIETPEGPNIGLIGSLACYSRVNSFGFIETPYRRVVNGKVTDDIEYMTATQEDEHAIAQASTPLRPDNSFVDERVLVRRKGGEVEVVPADQVDYMDVSGRQMVSVATSLIPFLEHNDANRALMGSNMQRQAVPLLVTESPLVGTGMERYVAIDAGDVLIAEDPGIVGDVSADVVTVKQDDGKHRDYHVGKFVRSNQGNCYNQRVVVRSGDRVEKGTVLADGPCTDKGELSLGRNLLVAFMPWEGYNFEDAIIISQNLVKDDTLSSIHIEEHEVSTRDTKLGSEEITRDLPNVSMDYIKDLDERGIIRIGAEVGPGDILVGKVTPKGETELSAEERLLRAIFNEKSMEVRDTSLKVPHGQQGTVIDVKLFDAVDGEDKLGAGINQRVVVYIAHKRKITEGDKLAGRHGNKGVISKILPVEDMPFMADGTPVDIILNPLGVPARMNFGQVLETHLGWISKQGWKIEGDPDWAKDIRVREAQPDSRVSSPVFDGISEGEITGLFSSVFPNRDGERAVGSDGKAILYDGRTGEPFPEPISVGYMYVLKLHHLVDDKIHARSTGPYSMITQQPLGGKAQFGGQRFGEMEVWALEAYGAAHALQELLTIKSDDVVGRVKVYDAIVKGYPIPTPGVPESFKVIVKEMQSLCINIEVVSDGEDDVSADAETLQIEEGLDTSPKVEVGSLEEV.

Belongs to the RNA polymerase beta chain family. The RNAP catalytic core consists of 2 alpha, 1 beta, 1 beta' and 1 omega subunit. When a sigma factor is associated with the core the holoenzyme is formed, which can initiate transcription.

The enzyme catalyses RNA(n) + a ribonucleoside 5'-triphosphate = RNA(n+1) + diphosphate. Its function is as follows. DNA-dependent RNA polymerase catalyzes the transcription of DNA into RNA using the four ribonucleoside triphosphates as substrates. The protein is DNA-directed RNA polymerase subunit beta of Tropheryma whipplei (strain TW08/27) (Whipple's bacillus).